Reading from the N-terminus, the 164-residue chain is Anterior gradient protein 2 (164 aa).

Positions 1-20 (METVLKTLFVLLVATSLTLA) are cleaved as a signal peptide. 2 consecutive short sequence motifs (homodimer stabilization; interchain) follow at residues 34-43 (SRGWGDNLEW) and 49-56 (EGLYKAKT).

The protein belongs to the AGR family. Monomer and homodimer.

It is found in the secreted. It localises to the endoplasmic reticulum. This chain is Anterior gradient protein 2, found in Xenopus tropicalis (Western clawed frog).